Here is a 193-residue protein sequence, read N- to C-terminus: Large ribosomal subunit protein bL25 (193 aa).

It belongs to the bacterial ribosomal protein bL25 family. CTC subfamily. In terms of assembly, part of the 50S ribosomal subunit; part of the 5S rRNA/L5/L18/L25 subcomplex. Contacts the 5S rRNA. Binds to the 5S rRNA independently of L5 and L18.

Functionally, this is one of the proteins that binds to the 5S RNA in the ribosome where it forms part of the central protuberance. In Lachnoclostridium phytofermentans (strain ATCC 700394 / DSM 18823 / ISDg) (Clostridium phytofermentans), this protein is Large ribosomal subunit protein bL25.